Here is a 283-residue protein sequence, read N- to C-terminus: ATP synthase gamma chain (283 aa).

The protein belongs to the ATPase gamma chain family. In terms of assembly, F-type ATPases have 2 components, CF(1) - the catalytic core - and CF(0) - the membrane proton channel. CF(1) has five subunits: alpha(3), beta(3), gamma(1), delta(1), epsilon(1). CF(0) has three main subunits: a, b and c.

The protein resides in the cell membrane. Its function is as follows. Produces ATP from ADP in the presence of a proton gradient across the membrane. The gamma chain is believed to be important in regulating ATPase activity and the flow of protons through the CF(0) complex. The chain is ATP synthase gamma chain from Clostridium kluyveri (strain NBRC 12016).